The sequence spans 95 residues: Small ribosomal subunit protein bS6 (95 aa).

This sequence belongs to the bacterial ribosomal protein bS6 family.

Its function is as follows. Binds together with bS18 to 16S ribosomal RNA. This Nocardia farcinica (strain IFM 10152) protein is Small ribosomal subunit protein bS6.